The primary structure comprises 99 residues: uncharacterized protein (99 aa).

Residues L6–I26 form a helical membrane-spanning segment. The region spanning K48 to F95 is the LysM domain.

The protein localises to the secreted. The protein resides in the cell wall. It localises to the membrane. This is an uncharacterized protein from Bacillus subtilis (strain 168).